The following is a 100-amino-acid chain: NADH-quinone oxidoreductase subunit K (100 aa).

Transmembrane regions (helical) follow at residues 2–22, 29–49, and 63–83; these read ITLTHYLILSAILFSIALVGI, LMLFFATEIALNAVNIALAAF, and FFIIAIAASEVAVGLGLLIIW.

This sequence belongs to the complex I subunit 4L family. As to quaternary structure, NDH-1 is composed of 14 different subunits. Subunits NuoA, H, J, K, L, M, N constitute the membrane sector of the complex.

It localises to the cell inner membrane. It catalyses the reaction a quinone + NADH + 5 H(+)(in) = a quinol + NAD(+) + 4 H(+)(out). NDH-1 shuttles electrons from NADH, via FMN and iron-sulfur (Fe-S) centers, to quinones in the respiratory chain. The immediate electron acceptor for the enzyme in this species is believed to be ubiquinone. Couples the redox reaction to proton translocation (for every two electrons transferred, four hydrogen ions are translocated across the cytoplasmic membrane), and thus conserves the redox energy in a proton gradient. The sequence is that of NADH-quinone oxidoreductase subunit K from Nitratiruptor sp. (strain SB155-2).